A 501-amino-acid chain; its full sequence is Mitogen-activated protein kinase 16 (501 aa).

The Protein kinase domain occupies 22–313 (YEVTEVVGKG…AAEALTDPYF (292 aa)). ATP is bound by residues 28-36 (VGKGSYGVV) and K51. The active-site Proton acceptor is D148. Position 184 is a phosphothreonine (T184). Residues 184–186 (TDY) carry the TXY motif. Y186 bears the Phosphotyrosine mark. Positions 477 to 501 (DEESMSEYMNEAADGVPHKIAQLKT) are disordered.

Belongs to the protein kinase superfamily. CMGC Ser/Thr protein kinase family. MAP kinase subfamily. Post-translationally, dually phosphorylated on Thr-184 and Tyr-186, which activates the enzyme.

The catalysed reaction is L-seryl-[protein] + ATP = O-phospho-L-seryl-[protein] + ADP + H(+). It catalyses the reaction L-threonyl-[protein] + ATP = O-phospho-L-threonyl-[protein] + ADP + H(+). With respect to regulation, activated by threonine and tyrosine phosphorylation. The protein is Mitogen-activated protein kinase 16 (MPK16) of Oryza sativa subsp. japonica (Rice).